The chain runs to 311 residues: Malate dehydrogenase (311 aa).

Residues 7 to 13 and Asp-34 contribute to the NAD(+) site; that span reads GAAGGIG. Substrate-binding residues include Arg-81 and Arg-87. NAD(+) contacts are provided by residues Asn-94 and 117–119; that span reads ITN. Substrate contacts are provided by Asn-119 and Arg-153. His-177 (proton acceptor) is an active-site residue. Met-227 provides a ligand contact to NAD(+).

This sequence belongs to the LDH/MDH superfamily. MDH type 1 family. As to quaternary structure, homodimer.

It catalyses the reaction (S)-malate + NAD(+) = oxaloacetate + NADH + H(+). In terms of biological role, catalyzes the reversible oxidation of malate to oxaloacetate. The protein is Malate dehydrogenase of Histophilus somni (strain 129Pt) (Haemophilus somnus).